The sequence spans 120 residues: uncharacterized protein (120 aa).

The interval T79–K120 is disordered. Basic residues predominate over residues G110–K120.

This is an uncharacterized protein from Schizosaccharomyces pombe (strain 972 / ATCC 24843) (Fission yeast).